The sequence spans 300 residues: Protease HtpX (300 aa).

The next 2 membrane-spanning stretches (helical) occupy residues 4–24 (ILLFLATNLAVVLVASITLRL) and 40–60 (SLLIFCFVIGMAGSLVSLFIS). Position 145 (histidine 145) interacts with Zn(2+). Glutamate 146 is an active-site residue. Residue histidine 149 coordinates Zn(2+). Helical transmembrane passes span 153 to 173 (GDMVTLALIQGVLNTFVMFFA) and 193 to 213 (LGFFGYMAVVIVAEIVFGLVA). Residue glutamate 225 participates in Zn(2+) binding.

It belongs to the peptidase M48B family. It depends on Zn(2+) as a cofactor.

It localises to the cell inner membrane. The polypeptide is Protease HtpX (Chromohalobacter salexigens (strain ATCC BAA-138 / DSM 3043 / CIP 106854 / NCIMB 13768 / 1H11)).